A 505-amino-acid polypeptide reads, in one-letter code: L-carnitine/gamma-butyrobetaine antiporter (505 aa).

Transmembrane regions (helical) follow at residues 10–30 (IEPKVFFPPLIIVGILCWLTV), 50–70 (IWGWAFEWYMVVMLFGWFWLV), 92–112 (IFMMFASCTSAAVLFWGSIEI), 143–163 (GPLPWATYSFLSVAFAYFFFV), 195–215 (FYLVALIFAMGTSLGLATPLV), 231–251 (LDAIIITCWIVLNAICVACGL), 263–283 (SYLSFLMLGWVFIVSGASFIM), 316–336 (WTVFYWAWWVIYAIQMSIFLA), 347–367 (LCFGMVLGLTASTWILWTVLG), 403–423 (FSTATMWGFFILCFIATVTLI), 446–466 (LLVRIGWSVLVGVIGIVLLAL), and 475–495 (AIIAGGCPLFFVNIMVTLSFI).

The protein belongs to the BCCT transporter (TC 2.A.15) family. CaiT subfamily. Homotrimer.

The protein localises to the cell inner membrane. It catalyses the reaction 4-(trimethylamino)butanoate(in) + (R)-carnitine(out) = 4-(trimethylamino)butanoate(out) + (R)-carnitine(in). It participates in amine and polyamine metabolism; carnitine metabolism. Catalyzes the exchange of L-carnitine for gamma-butyrobetaine. The protein is L-carnitine/gamma-butyrobetaine antiporter of Citrobacter koseri (strain ATCC BAA-895 / CDC 4225-83 / SGSC4696).